A 396-amino-acid chain; its full sequence is Probable arginine kinase F46H5.3 (396 aa).

Residues 47-129 (KIEEGYAKLQ…FDPLIQDYHN (83 aa)) form the Phosphagen kinase N-terminal domain. 102–106 (GVGVY) serves as a coordination point for substrate. The Phosphagen kinase C-terminal domain maps to 159–396 (FINSTRIRCG…AHLIALEKAA (238 aa)). Residues 162–166 (STRIR) and histidine 226 contribute to the ATP site. Glutamate 266 is a binding site for substrate. Arginine 270 lines the ATP pocket. Cysteine 312 is a substrate binding site. ATP contacts are provided by residues 321 to 325 (RASVH), 349 to 354 (RGIHGE), and aspartate 364. A substrate-binding site is contributed by glutamate 354.

It belongs to the ATP:guanido phosphotransferase family.

It catalyses the reaction L-arginine + ATP = N(omega)-phospho-L-arginine + ADP + H(+). In Caenorhabditis elegans, this protein is Probable arginine kinase F46H5.3.